A 428-amino-acid chain; its full sequence is Serine--tRNA ligase (428 aa).

231–233 serves as a coordination point for L-serine; the sequence is TAE. Residues 262 to 264 and valine 278 contribute to the ATP site; that span reads RRE. Glutamate 285 lines the L-serine pocket. 349–352 serves as a coordination point for ATP; it reads EVSS. Position 384 (serine 384) interacts with L-serine.

This sequence belongs to the class-II aminoacyl-tRNA synthetase family. Type-1 seryl-tRNA synthetase subfamily. As to quaternary structure, homodimer. The tRNA molecule binds across the dimer.

Its subcellular location is the cytoplasm. It catalyses the reaction tRNA(Ser) + L-serine + ATP = L-seryl-tRNA(Ser) + AMP + diphosphate + H(+). It carries out the reaction tRNA(Sec) + L-serine + ATP = L-seryl-tRNA(Sec) + AMP + diphosphate + H(+). It participates in aminoacyl-tRNA biosynthesis; selenocysteinyl-tRNA(Sec) biosynthesis; L-seryl-tRNA(Sec) from L-serine and tRNA(Sec): step 1/1. Functionally, catalyzes the attachment of serine to tRNA(Ser). Is also able to aminoacylate tRNA(Sec) with serine, to form the misacylated tRNA L-seryl-tRNA(Sec), which will be further converted into selenocysteinyl-tRNA(Sec). The sequence is that of Serine--tRNA ligase from Chlamydia trachomatis serovar L2 (strain ATCC VR-902B / DSM 19102 / 434/Bu).